The following is a 221-amino-acid chain: uncharacterized protein (221 aa).

The next 5 membrane-spanning stretches (helical) occupy residues 2–22, 34–54, 97–117, 131–151, and 177–197; these read FIAKSIVIGLLICVLFFFFFV, LLTLGLLNASLTALSDLLAQA, AYGLCLTPIQFRWFVALSNVI, ALDQFIFAPLGIVFFFLFMGI, and ILWPAVQLFNFTFVPLVLQVI.

This sequence belongs to the peroxisomal membrane protein PXMP2/4 family.

Its subcellular location is the membrane. This is an uncharacterized protein from Schizosaccharomyces pombe (strain 972 / ATCC 24843) (Fission yeast).